The following is a 464-amino-acid chain: ATP synthase subunit beta (464 aa).

150 to 157 (GGAGVGKT) serves as a coordination point for ATP.

Belongs to the ATPase alpha/beta chains family. In terms of assembly, F-type ATPases have 2 components, CF(1) - the catalytic core - and CF(0) - the membrane proton channel. CF(1) has five subunits: alpha(3), beta(3), gamma(1), delta(1), epsilon(1). CF(0) has three main subunits: a(1), b(2) and c(9-12). The alpha and beta chains form an alternating ring which encloses part of the gamma chain. CF(1) is attached to CF(0) by a central stalk formed by the gamma and epsilon chains, while a peripheral stalk is formed by the delta and b chains.

The protein resides in the cell membrane. The catalysed reaction is ATP + H2O + 4 H(+)(in) = ADP + phosphate + 5 H(+)(out). Functionally, produces ATP from ADP in the presence of a proton gradient across the membrane. The catalytic sites are hosted primarily by the beta subunits. The sequence is that of ATP synthase subunit beta from Dehalococcoides mccartyi (strain ATCC BAA-2266 / KCTC 15142 / 195) (Dehalococcoides ethenogenes (strain 195)).